We begin with the raw amino-acid sequence, 207 residues long: Large ribosomal subunit protein uL4 (207 aa).

Positions 45 to 78 (RQGTHKTKNRAEVSGGGRKPWRQKGTGRARQGSI) are disordered.

It belongs to the universal ribosomal protein uL4 family. In terms of assembly, part of the 50S ribosomal subunit.

Functionally, one of the primary rRNA binding proteins, this protein initially binds near the 5'-end of the 23S rRNA. It is important during the early stages of 50S assembly. It makes multiple contacts with different domains of the 23S rRNA in the assembled 50S subunit and ribosome. Its function is as follows. Forms part of the polypeptide exit tunnel. This chain is Large ribosomal subunit protein uL4, found in Geobacillus sp. (strain WCH70).